A 293-amino-acid polypeptide reads, in one-letter code: Epidermal growth factor-like protein 8 (293 aa).

A signal peptide spans 1-25 (MGSRAELCTLLGGFSFLLLLIPGEG). The region spanning 34–112 (SQGVCSKQTL…RHPGALTCEA (79 aa)) is the EMI domain. Disulfide bonds link Cys-38–Cys-97, Cys-65–Cys-71, Cys-96–Cys-110, Cys-114–Cys-124, Cys-118–Cys-130, Cys-132–Cys-141, Cys-148–Cys-159, Cys-155–Cys-168, and Cys-170–Cys-183. N-linked (GlcNAc...) asparagine glycosylation occurs at Asn-50. Residues 111–142 (EAICAKPCLNGGVCVRPDQCECAPGWGGKHCH) enclose the EGF-like 1 domain. Residues 144–184 (DVDECRTSITLCSHHCFNTAGSFTCGCPHDLVLGVDGRTCM) form the EGF-like 2; calcium-binding domain. Residues 195-232 (SILSVAVREAEKDERALKQEIHELRGRLERLEQWAGQA) are a coiled coil.

Its subcellular location is the secreted. The protein is Epidermal growth factor-like protein 8 (EGFL8) of Homo sapiens (Human).